We begin with the raw amino-acid sequence, 610 residues long: Protein SAN1 (610 aa).

Positions 1–10 (MSESGQEQNR) are enriched in polar residues. Disordered stretches follow at residues 1-36 (MSESGQEQNRGTNTSPNNAENNNNSNAASGPLNGGA) and 176-231 (VDST…PSIP). Low complexity predominate over residues 11-36 (GTNTSPNNAENNNNSNAASGPLNGGA). Residues 194–203 (EGTKKRKDNE) show a composition bias toward basic and acidic residues. Polar residues predominate over residues 210–223 (TADNDSNPSITNAT). Residues 240–280 (NDEETNPSYKHSPIKLPCGHIFGRECIYKWSRLENSCPLCR) form an RING-type zinc finger. Disordered regions lie at residues 318–348 (TAVNSTNENSSAPSENTSNTTVPTIGNASSG), 360–453 (VPQN…TDPH), 471–502 (GTSDTSATTAPGAQTVHNQGRNDSSSSDTTQG), 514–554 (GHFT…GVAS), and 569–610 (NNNS…RSSQ). The segment covering 319 to 348 (AVNSTNENSSAPSENTSNTTVPTIGNASSG) has biased composition (polar residues). Low complexity-rich tracts occupy residues 384 to 406 (NGPSSTTQNPPSNSGGSNNNQSP) and 425 to 447 (PSASDSSASPSAANGPNSNNTSS). The segment covering 471-492 (GTSDTSATTAPGAQTVHNQGRN) has biased composition (polar residues). The span at 493 to 502 (DSSSSDTTQG) shows a compositional bias: low complexity. Polar residues-rich tracts occupy residues 533–554 (QQRGGSTGENNRNNLFSSGVAS) and 592–610 (DTTIHNDVPNDNNEQRSSQ).

Functionally, plays a specific role in mating-type regulation of yeast, by acting post-translationally to control the stability or activity of the SIR4 proteins. The sequence is that of Protein SAN1 (SAN1) from Saccharomyces cerevisiae (strain ATCC 204508 / S288c) (Baker's yeast).